The chain runs to 174 residues: ATP-dependent protease subunit HslV (174 aa).

The active site involves T2. 3 residues coordinate Na(+): G157, D160, and T163.

The protein belongs to the peptidase T1B family. HslV subfamily. A double ring-shaped homohexamer of HslV is capped on each side by a ring-shaped HslU homohexamer. The assembly of the HslU/HslV complex is dependent on binding of ATP.

The protein localises to the cytoplasm. It carries out the reaction ATP-dependent cleavage of peptide bonds with broad specificity.. Its activity is regulated as follows. Allosterically activated by HslU binding. Protease subunit of a proteasome-like degradation complex believed to be a general protein degrading machinery. The sequence is that of ATP-dependent protease subunit HslV from Aliivibrio fischeri (strain MJ11) (Vibrio fischeri).